The chain runs to 263 residues: 3'-5' ssDNA/RNA exonuclease TatD (263 aa).

The a divalent metal cation site is built by glutamate 91, histidine 127, and histidine 152.

It belongs to the metallo-dependent hydrolases superfamily. TatD-type hydrolase family. TatD subfamily. In terms of assembly, monomer. It depends on Mg(2+) as a cofactor.

It is found in the cytoplasm. 3'-5' exonuclease that prefers single-stranded DNA and RNA. May play a role in the H(2)O(2)-induced DNA damage repair. This is 3'-5' ssDNA/RNA exonuclease TatD from Cronobacter sakazakii (strain ATCC BAA-894) (Enterobacter sakazakii).